Here is a 315-residue protein sequence, read N- to C-terminus: Methionyl-tRNA formyltransferase (315 aa).

Residue serine 113–proline 116 coordinates (6S)-5,6,7,8-tetrahydrofolate.

This sequence belongs to the Fmt family.

It carries out the reaction L-methionyl-tRNA(fMet) + (6R)-10-formyltetrahydrofolate = N-formyl-L-methionyl-tRNA(fMet) + (6S)-5,6,7,8-tetrahydrofolate + H(+). Functionally, attaches a formyl group to the free amino group of methionyl-tRNA(fMet). The formyl group appears to play a dual role in the initiator identity of N-formylmethionyl-tRNA by promoting its recognition by IF2 and preventing the misappropriation of this tRNA by the elongation apparatus. The protein is Methionyl-tRNA formyltransferase of Yersinia enterocolitica serotype O:8 / biotype 1B (strain NCTC 13174 / 8081).